Consider the following 387-residue polypeptide: Small ribosomal subunit protein mS31 (387 aa).

Residues 1–56 (MLHRIPAFIRPRPFSGLPLSCGNREVSVAASVLPAAGSGAVRTENTIQRHFCTSRS) constitute a mitochondrion transit peptide. Disordered regions lie at residues 59 to 83 (SKKDDQSVPANETSQKAAESQGEGK) and 203 to 228 (KSPSMRVSSRPQHQIQFDEEVDSSLS). 2 stretches are compositionally biased toward polar residues: residues 66–76 (VPANETSQKAA) and 207–217 (MRVSSRPQHQI).

This sequence belongs to the mitochondrion-specific ribosomal protein mS31 family. In terms of assembly, component of the mitochondrial ribosome small subunit (28S) which comprises a 12S rRNA and about 30 distinct proteins.

The protein localises to the mitochondrion. In Rattus norvegicus (Rat), this protein is Small ribosomal subunit protein mS31 (Mrps31).